Consider the following 155-residue polypeptide: Sweet protein mabinlin-2 (155 aa).

An N-terminal signal peptide occupies residues 1–20 (MAKLIFLFATLALFVLLANA). Positions 21 to 35 (SIQTTVIEVDEEEDN) are excised as a propeptide. Gln36 is modified (pyrrolidone carboxylic acid). Cystine bridges form between Cys40–Cys103, Cys53–Cys92, Cys93–Cys141, and Cys105–Cys149. Residues 64 to 86 (GGQPDELEDEVEDDNDDENQPRR) form a disordered region. A compositionally biased stretch (acidic residues) spans 68-81 (DELEDEVEDDNDDE). Positions 69 to 82 (ELEDEVEDDNDDEN) are excised as a propeptide. At Gln83 the chain carries Pyrrolidone carboxylic acid. Residue Pro155 is a propeptide.

The protein belongs to the 2S seed storage albumins family. Heterodimer of a small A and a large B chain linked by disulfide bonds.

In terms of biological role, heat stable 2S seed storage protein having sweetness-inducing activity. This is Sweet protein mabinlin-2 from Capparis masaikai (Mabinlang).